We begin with the raw amino-acid sequence, 270 residues long: Aliphatic sulfonates import ATP-binding protein SsuB 3 (270 aa).

In terms of domain architecture, ABC transporter spans 17 to 238 (LAVRKLKKAF…VRGSHRLAAL (222 aa)). 49 to 56 (GRSGCGKS) lines the ATP pocket.

The protein belongs to the ABC transporter superfamily. Aliphatic sulfonates importer (TC 3.A.1.17.2) family. The complex is composed of two ATP-binding proteins (SsuB), two transmembrane proteins (SsuC) and a solute-binding protein (SsuA).

The protein localises to the cell inner membrane. The enzyme catalyses ATP + H2O + aliphatic sulfonate-[sulfonate-binding protein]Side 1 = ADP + phosphate + aliphatic sulfonateSide 2 + [sulfonate-binding protein]Side 1.. Its function is as follows. Part of the ABC transporter complex SsuABC involved in aliphatic sulfonates import. Responsible for energy coupling to the transport system. The protein is Aliphatic sulfonates import ATP-binding protein SsuB 3 of Pseudomonas syringae pv. syringae (strain B728a).